Here is a 244-residue protein sequence, read N- to C-terminus: 1-(5-phosphoribosyl)-5-[(5-phosphoribosylamino)methylideneamino] imidazole-4-carboxamide isomerase (244 aa).

The active-site Proton acceptor is D7. The Proton donor role is filled by D129.

This sequence belongs to the HisA/HisF family.

The protein localises to the cytoplasm. It carries out the reaction 1-(5-phospho-beta-D-ribosyl)-5-[(5-phospho-beta-D-ribosylamino)methylideneamino]imidazole-4-carboxamide = 5-[(5-phospho-1-deoxy-D-ribulos-1-ylimino)methylamino]-1-(5-phospho-beta-D-ribosyl)imidazole-4-carboxamide. It participates in amino-acid biosynthesis; L-histidine biosynthesis; L-histidine from 5-phospho-alpha-D-ribose 1-diphosphate: step 4/9. This is 1-(5-phosphoribosyl)-5-[(5-phosphoribosylamino)methylideneamino] imidazole-4-carboxamide isomerase from Pseudoalteromonas atlantica (strain T6c / ATCC BAA-1087).